The following is a 72-amino-acid chain: Prokaryotic ubiquitin-like protein Pup (72 aa).

Residues 1 to 10 (MATRDSGGGQ) are compositionally biased toward gly residues. The interval 1–41 (MATRDSGGGQQHTNRHADEVEEVAAEGNDASDLKERHEKLS) is disordered. Positions 21-61 (EEVAAEGNDASDLKERHEKLSEDVDSLLDEIDDVLEENAEE) form a coiled coil. An ARC ATPase binding region spans residues 28-66 (NDASDLKERHEKLSEDVDSLLDEIDDVLEENAEEFVKGY). Over residues 31-41 (SDLKERHEKLS) the composition is skewed to basic and acidic residues. An Isoglutamyl lysine isopeptide (Glu-Lys) (interchain with K-? in acceptor proteins) cross-link involves residue E72.

This sequence belongs to the prokaryotic ubiquitin-like protein family. Strongly interacts with the proteasome-associated ATPase ARC through a hydrophobic interface; the interacting region of Pup lies in its C-terminal half. There is one Pup binding site per ARC hexamer ring.

The protein operates within protein degradation; proteasomal Pup-dependent pathway. Protein modifier that is covalently attached to lysine residues of substrate proteins, thereby targeting them for proteasomal degradation. The tagging system is termed pupylation. This chain is Prokaryotic ubiquitin-like protein Pup, found in Frankia alni (strain DSM 45986 / CECT 9034 / ACN14a).